A 145-amino-acid polypeptide reads, in one-letter code: Actin-related protein 4A (145 aa).

A disordered region spans residues 47–66; sequence IDDAANTTEDAKESDKEKGK. Over residues 55-64 the composition is skewed to basic and acidic residues; the sequence is EDAKESDKEK.

The protein belongs to the actin family. ARP4 subfamily. In terms of tissue distribution, expressed in roots, leaves and flowers.

The chain is Actin-related protein 4A (ARP4A) from Arabidopsis thaliana (Mouse-ear cress).